Consider the following 505-residue polypeptide: Deoxyguanosinetriphosphate triphosphohydrolase (505 aa).

Residues 66 to 273 (RLTHSMEVQQ…MEAADDISYC (208 aa)) enclose the HD domain.

It belongs to the dGTPase family. Type 1 subfamily. In terms of assembly, homotetramer. The cofactor is Mg(2+).

It carries out the reaction dGTP + H2O = 2'-deoxyguanosine + triphosphate + H(+). In terms of biological role, dGTPase preferentially hydrolyzes dGTP over the other canonical NTPs. The chain is Deoxyguanosinetriphosphate triphosphohydrolase from Escherichia fergusonii (strain ATCC 35469 / DSM 13698 / CCUG 18766 / IAM 14443 / JCM 21226 / LMG 7866 / NBRC 102419 / NCTC 12128 / CDC 0568-73).